A 231-amino-acid polypeptide reads, in one-letter code: Uroporphyrinogen-III C-methyltransferase (231 aa).

S-adenosyl-L-homocysteine is bound by residues P10, 85-87, 115-116, M166, and A218; these read GGD and TS.

Belongs to the precorrin methyltransferase family. In terms of assembly, homodimer.

The catalysed reaction is uroporphyrinogen III + 2 S-adenosyl-L-methionine = precorrin-2 + 2 S-adenosyl-L-homocysteine + H(+). It carries out the reaction uroporphyrinogen III + S-adenosyl-L-methionine = precorrin-1 + S-adenosyl-L-homocysteine + H(+). It catalyses the reaction precorrin-1 + S-adenosyl-L-methionine = precorrin-2 + S-adenosyl-L-homocysteine. It functions in the pathway cofactor biosynthesis; adenosylcobalamin biosynthesis; precorrin-2 from uroporphyrinogen III: step 1/1. Does not show substrate inhibition at uroporphyrinogen III concentrations of up to 20 uM, in contrast to SUMT from Sinorhizobium (previously believed to be P.denitrificans). Functionally, catalyzes the two successive C-2 and C-7 methylation reactions involved in the conversion of uroporphyrinogen III to precorrin-2 via the intermediate formation of precorrin-1. It is a step in the biosynthesis of both cobalamin (vitamin B12) and coenzyme F430. The protein is Uroporphyrinogen-III C-methyltransferase (cobA) of Methanobacterium ivanovii.